A 689-amino-acid polypeptide reads, in one-letter code: Armadillo-like helical domain-containing protein 3 (689 aa).

A helical transmembrane segment spans residues I520–G538.

This sequence belongs to the ARMH3 family.

It is found in the golgi apparatus membrane. It localises to the cytoplasm. Its function is as follows. May be involved in Golgi maintenance and protein secretion. The protein is Armadillo-like helical domain-containing protein 3 of Xenopus laevis (African clawed frog).